The sequence spans 113 residues: N-alpha-acetyltransferase 38-A, NatC auxiliary subunit (113 aa).

The segment at 1 to 29 is disordered; the sequence is MAAVLEENGCSRQSSPSAGDSDAEPGDTA. A Sm domain is found at 28–106; that stretch reads TARHKLESLL…IVSIQVELES (79 aa).

This sequence belongs to the snRNP Sm proteins family. As to quaternary structure, component of the N-terminal acetyltransferase C (NatC) complex, which is composed of naa35, naa38 and naa30.

The protein localises to the cytoplasm. In terms of biological role, auxillary component of the N-terminal acetyltransferase C (NatC) complex which catalyzes acetylation of N-terminal methionine residues. The chain is N-alpha-acetyltransferase 38-A, NatC auxiliary subunit (naa38-a) from Xenopus laevis (African clawed frog).